Consider the following 109-residue polypeptide: Tektin-3 (109 aa).

The protein belongs to the tektin family. As to quaternary structure, microtubule inner protein component of sperm flagellar doublet microtubules. Interacts with TEKT1, TEKT2, TEKT4 and TEKT5. Interacts with CCDC38. N- and O-glycosylated. In terms of processing, may be proteolytically processed during the epididymal transit of spermatozoa. Post-translationally, ubiquitinated, leading to its degradation. Deubiquitinated by USP16, promoting its stability.

It localises to the cytoplasm. It is found in the cytoskeleton. The protein resides in the cilium axoneme. Its subcellular location is the flagellum axoneme. The protein localises to the cytoplasmic vesicle. It localises to the secretory vesicle. It is found in the acrosome outer membrane. Microtubule inner protein (MIP) part of the dynein-decorated doublet microtubules (DMTs) in cilia and flagellar axoneme. Forms filamentous polymers in the walls of ciliary and flagellar microtubules. Required for normal sperm mobility. This is Tektin-3 from Mesocricetus auratus (Golden hamster).